Consider the following 478-residue polypeptide: Septin-4 (478 aa).

The disordered stretch occupies residues 38-115 (VKDFSGNESC…RSPWGKLDPY (78 aa)). A compositionally biased stretch (low complexity) spans 95–108 (APAPLSPSARPRSP). Phosphoserine is present on residues S117 and S118. Residues 141-414 (KGFDFTLMVA…ENYRAQCIQS (274 aa)) form the Septin-type G domain. Residues 151-158 (GESGLGKS) are G1 motif. Residues 151–158 (GESGLGKS) and T185 contribute to the GTP site. The G3 motif stretch occupies residues 208–211 (DTPG). The tract at residues 289-292 (AKAD) is G4 motif. Position 290–298 (290–298 (KADTLTPPE)) interacts with GTP. S325 carries the phosphoserine modification. GTP is bound by residues G348 and R363. The tract at residues 425-448 (RNKLTRESGTDLPIPAVPPGTDPE) is disordered. A Phosphoserine modification is found at S432. T434 is modified (phosphothreonine). Residues 446–478 (DPETEKLIREKDEELRRMQEMLHKIQKQMKETY) are a coiled coil.

Belongs to the TRAFAC class TrmE-Era-EngA-EngB-Septin-like GTPase superfamily. Septin GTPase family. In terms of assembly, septins polymerize into heterooligomeric protein complexes that form filaments, and can associate with cellular membranes, actin filaments and microtubules. GTPase activity is required for filament formation. Interacts with SEPTIN8. Component of a septin core octameric complex consisting of SEPTIN12, SEPTIN7, SEPTIN6 and SEPTIN2 or SEPTIN4 in the order 12-7-6-2-2-6-7-12 or 12-7-6-4-4-6-7-12. Interacts with SEPTIN14 (via C-terminus). Interacts with DYRK1A. Interacts with SLC6A3/DAT and SNCA/alpha-synuclein. Interacts with STX1A; in the striatum. Interacts with XIAP (via BIR3 domain) following the induction of apoptosis. Interacts with AREL1 (via HECT domain); in the cytoplasm following induction of apoptosis. In terms of processing, ubiquitinated by AREL1. Post-translationally, phosphorylated by DYRK1A.

The protein resides in the cytoplasm. The protein localises to the cell projection. Its subcellular location is the cilium. It is found in the flagellum. It localises to the cytoplasmic vesicle. The protein resides in the secretory vesicle. The protein localises to the axon. Its subcellular location is the dendrite. It is found in the perikaryon. It localises to the synapse. Filament-forming cytoskeletal GTPase. Pro-apoptotic protein involved in LGR5-positive intestinal stem cell and Paneth cell expansion in the intestines, via its interaction with XIAP. May also play a role in the regulation of cell fate in the intestine. Positive regulator of apoptosis involved in hematopoietic stem cell homeostasis; via its interaction with XIAP. Negative regulator of repair and hair follicle regeneration in response to injury, due to inhibition of hair follicle stem cell proliferation, potentially via its interaction with XIAP. Plays an important role in male fertility and sperm motility. During spermiogenesis, essential for the establishment of the annulus (a fibrous ring structure connecting the midpiece and the principal piece of the sperm flagellum) which is a requisite for the structural and mechanical integrity of the sperm. Involved in the migration of cortical neurons and the formation of neuron leading processes during embryonic development. Required for dopaminergic metabolism in presynaptic autoreceptors; potentially via activity as a presynaptic scaffold protein. In Pongo abelii (Sumatran orangutan), this protein is Septin-4.